Here is a 134-residue protein sequence, read N- to C-terminus: D-dopachrome decarboxylase-like protein (134 aa).

It belongs to the MIF family.

Its subcellular location is the cytoplasm. In terms of biological role, may have lyase activity. This Homo sapiens (Human) protein is D-dopachrome decarboxylase-like protein (DDTL).